The sequence spans 740 residues: F-BAR and double SH3 domains protein 2 (740 aa).

An F-BAR domain is found at 8 to 282; sequence VKVTQELKNI…NSSKVVRDYN (275 aa). The disordered stretch occupies residues 303–323; that stretch reads PCDSDTSRQLESETGTTEEHS. Residues 307-323 are compositionally biased toward basic and acidic residues; the sequence is DTSRQLESETGTTEEHS. Residues 356 to 397 are a coiled coil; sequence GAAVSEQSRAELEQKIDEARENIRKAEIIKLKAEARLDLLKQ. SH3 domains follow at residues 469 to 530 and 567 to 629; these read NYPL…FPTS and ASVC…ELSA. The segment at 567 to 629 is required and sufficient for location at clathrin-coated pits; it reads ASVCFVKALY…PSVLVEELSA (63 aa). Residues 633–740 form a disordered region; it reads GDTPWMREIQ…KIEDVEITLV (108 aa). The span at 646–657 shows a compositional bias: pro residues; sequence SPKPHASLPPLP. Phosphoserine is present on residues serine 675 and serine 681.

In terms of assembly, homodimer. Interacts (via SH3 domain 2) with ITSN1 (via SH3 domain 4). Recruited to clathrin-coated pits during a mid-to-late stage of assembly via interaction with ITSN1. Interacts (via SH3 domain 1) with WASL. Interacts with WAS. Interacts with CASK and MAGI1. CASK inhibits interaction with MAGI1. In terms of processing, phosphorylated. Phosphorylation on a Ser residue is important for recruitment to the cell membrane and for its role in promoting endocytosis. Liver, brain, heart, placenta, skeletal muscle, pancreas, lung and kidney.

It localises to the cytoplasm. The protein localises to the cell junction. The protein resides in the membrane. It is found in the clathrin-coated pit. Its subcellular location is the cell membrane. It localises to the cell projection. The protein localises to the stereocilium. In terms of biological role, adapter protein that plays a role in endocytosis via clathrin-coated pits. Contributes to the internalization of cell surface receptors, such as integrin ITGB1 and transferrin receptor. Promotes endocytosis of EGFR in cancer cells, and thereby contributes to the down-regulation of EGFR signaling. Recruited to clathrin-coated pits during a mid-to-late stage of assembly, where it is required for normal progress from U-shaped intermediate stage pits to terminal, omega-shaped pits. Binds to membranes enriched in phosphatidylinositol 3,4-bisphosphate or phosphatidylinositol 3,4,5-trisphosphate. When bound to membranes, promotes actin polymerization via its interaction with WAS and/or WASL which leads to the activation of the Arp2/3 complex. Does not promote actin polymerisation in the absence of membranes. The protein is F-BAR and double SH3 domains protein 2 (FCHSD2) of Homo sapiens (Human).